The chain runs to 351 residues: Terpene cyclase sdgD (351 aa).

9 helical membrane-spanning segments follow: residues 7 to 27 (INFI…TILI), 62 to 82 (TGVP…WPVI), 89 to 109 (LSLL…LLLL), 126 to 146 (WVGL…YCAI), 160 to 180 (IPHV…LVAL), 193 to 213 (VVVA…FMAS), 229 to 249 (IYIF…LASL), 281 to 301 (FLQW…VAVY), and 316 to 336 (LEVC…LLIW).

This sequence belongs to the membrane-bound ascI terpene cyclase family.

The protein resides in the membrane. Its pathway is secondary metabolite biosynthesis. Epoxide hydrolase; part of the gene cluster that mediates the biosynthesis of the polyenes aspernidgulenes. The carbon backbone of aspernidgulenes is synthesized by the HR-PKS sdgA, which accepts acetyl-CoA as the starter unit and performs malonyl-CoA extensions as well as regioselective methylation and reduction. The resulting nonaketide offloads the HR-PKS by intramolecular lactonization to yield the 5,6-dihydro-alpha-pyrone-containing hexaenoic acids preaspernidgulene A1 and A2. The FAD-dependent monooxygenase sdgC then installs the first epoxide on the penultimate double bond. Subsequently, the FAD-dependent monooxygenase sdgF presumably generates a ketone intermediate through Meinwald rearrangement involving a hydride shift. Next, sdgC introduces another epoxide on the last olefin of the ketone intermediate after E/Z isomerization. The epoxide hydrolase sdgD then catalyzes stereospecific cyclization of the 5,6-dihydro-alpha-pyrone and opening of the epoxide ring to form an oxygenated trimethylcyclopentanone and an oxabicyclo[2.2.1]heptane unit. Finally, the bicyclic unit undergoes hydrolytic cleavage, either spontaneously or catalyzed by sdgD, to assemble the dimethyl-gamma-lactone moiety in aspernidgulene A1. This is Terpene cyclase sdgD from Emericella nidulans (strain FGSC A4 / ATCC 38163 / CBS 112.46 / NRRL 194 / M139) (Aspergillus nidulans).